Consider the following 767-residue polypeptide: Tetratricopeptide repeat protein 16 (767 aa).

TPR repeat units follow at residues 18–51 (VREYYNQGHQCLLQEDWEMSVLFFSRALHLDPKL), 53–85 (DFYVFRAEAFIQLCDFSSALQNLRRAYSYDPGN), 93–126 (AFVLYLQGQCLYELCDFQEALCVFLQASDLQPQN), 128–155 (SFSYRCMACLLALKRYHDCLALITREVK), 208–241 (AKQSLQDASTLAVQGKVHRALKCINCAIENNPLD), 242–275 (PNFFFFRGTLRRRLQQFDHAVEDFLKAMDMVTDT), 288–321 (LLTYNDFAVHCYNHGAYQEGVLLLNKAIRDEQNE), 322–355 (KGLYINRGDCFFQLGNLAFAEADYKQALALSPLD), and 363–396 (GVLQEKLGFCQQKHRQFQTAEEHFSEAIRHSPQK). The interval 612 to 733 (EVTPAYGQRD…DSLSFSEISS (122 aa)) is disordered. The segment covering 684-718 (QRSSQKVTKTPSLTHSTTHSDIGESANDTPGQTPW) has biased composition (polar residues).

This Mus musculus (Mouse) protein is Tetratricopeptide repeat protein 16 (Ttc16).